The sequence spans 880 residues: Beta-glucosidase 2 (880 aa).

A signal peptide spans 1–17; the sequence is MLLILELLVLIIGLGVA. Asn24, Asn77, and Asn271 each carry an N-linked (GlcNAc...) asparagine glycan. The active site involves Asp299. 8 N-linked (GlcNAc...) asparagine glycosylation sites follow: Asn336, Asn343, Asn376, Asn548, Asn589, Asn712, Asn743, and Asn794.

It belongs to the glycosyl hydrolase 3 family.

The enzyme catalyses Hydrolysis of terminal, non-reducing beta-D-glucosyl residues with release of beta-D-glucose.. It functions in the pathway glycan metabolism; cellulose degradation. This chain is Beta-glucosidase 2 (BGL2), found in Saccharomycopsis fibuligera (Yeast).